The chain runs to 113 residues: U11-theraphotoxin-Hhn1a (113 aa).

A signal peptide spans 1 to 21 (MNTVRVAFLLVFVLAVSLGQA). Residues 22 to 74 (DKDENRMEMQEKTEQGKSYLDFAENLLLQKLEEPEAKLLEEDSEESRNSRQKR) constitute a propeptide that is removed on maturation. Residues 58–69 (KLLEEDSEESRN) are compositionally biased toward basic and acidic residues. Positions 58-83 (KLLEEDSEESRNSRQKRCIGEGVPCD) are disordered. Disulfide bonds link Cys75/Cys90, Cys82/Cys95, and Cys89/Cys110.

This sequence belongs to the neurotoxin 14 (magi-1) family. 01 (HNTX-16) subfamily. In terms of tissue distribution, expressed by the venom gland.

The protein localises to the secreted. Probable ion channel inhibitor. This is U11-theraphotoxin-Hhn1a from Cyriopagopus hainanus (Chinese bird spider).